Reading from the N-terminus, the 191-residue chain is Adenylate kinase (191 aa).

12–17 (GSGKTT) lines the ATP pocket. Positions 34–63 (STGDLLRAESAKKTERGLLIEKFTSQGELV) are NMP. AMP contacts are provided by residues Thr35, Arg40, 61–63 (ELV), 88–91 (GYPR), and Gln95. The LID stretch occupies residues 130–136 (GRSRGAD). Arg131 provides a ligand contact to ATP. Arg133 and Arg145 together coordinate AMP. Arg173 contributes to the ATP binding site.

Belongs to the adenylate kinase family. As to quaternary structure, monomer.

The protein localises to the cytoplasm. It carries out the reaction AMP + ATP = 2 ADP. The protein operates within purine metabolism; AMP biosynthesis via salvage pathway; AMP from ADP: step 1/1. Functionally, catalyzes the reversible transfer of the terminal phosphate group between ATP and AMP. Plays an important role in cellular energy homeostasis and in adenine nucleotide metabolism. This Helicobacter pylori (strain Shi470) protein is Adenylate kinase.